Reading from the N-terminus, the 102-residue chain is MAKEKIRIRLKAYDHRILDQSAEKIVETAKRSGATVSGPIPLPTEKTVYTILRAVHKYKDSREQFEMRTHKRLIDIVSPTPQTVDSLMRLDLPSGVDIEIKL.

The protein belongs to the universal ribosomal protein uS10 family. As to quaternary structure, part of the 30S ribosomal subunit.

Functionally, involved in the binding of tRNA to the ribosomes. This Bacillus thuringiensis (strain Al Hakam) protein is Small ribosomal subunit protein uS10.